Reading from the N-terminus, the 503-residue chain is Probable cytochrome P450 303a1 (503 aa).

Position 448 (cysteine 448) interacts with heme.

The protein belongs to the cytochrome P450 family. Requires heme as cofactor.

It localises to the endoplasmic reticulum membrane. It is found in the microsome membrane. In terms of biological role, may be involved in the metabolism of insect hormones and in the breakdown of synthetic insecticides. This is Probable cytochrome P450 303a1 (Cyp303a1) from Drosophila melanogaster (Fruit fly).